The primary structure comprises 589 residues: MTLHSNSTTSPLFPNISSSWVHSPSEAGLPLGTVTQLGSYNISQETGNFSSNDTSSDPLGGHTIWQVVFIAFLTGFLALVTIIGNILVIVAFKVNKQLKTVNNYFLLSLACADLIIGVISMNLFTTYIIMNRWALGNLACDLWLSIDYVASNASVMNLLVISFDRYFSITRPLTYRAKRTTKRAGVMIGLAWVISFVLWAPAILFWQYFVGKRTVPPGECFIQFLSEPTITFGTAIAAFYMPVTIMTILYWRIYKETEKRTKELAGLQASGTEAEAENFVHPTGSSRSCSSYELQQQGVKRSSRRKYGRCHFWFTTKSWKPSAEQMDQDHSSSDSWNNNDAAASLENSASSDEEDIGSETRAIYSIVLKLPGHSSILNSTKLPSSDNLQVSNEDLGTVDVERNAHKLQAQKSMGDGDNCQKDFTKLPIQLESAVDTGKTSDTNSSADKTTATLPLSFKEATLAKRFALKTRSQITKRKRMSLIKEKKAAQTLSAILLAFIITWTPYNIMVLVNTFCDSCIPKTYWNLGYWLCYINSTVNPVCYALCNKTFRTTFKTLLLCQCDKRKRRKQQYQQRQSVIFHKRVPEQAL.

Residues 1 to 66 lie on the Extracellular side of the membrane; it reads MTLHSNSTTS…DPLGGHTIWQ (66 aa). N6, N15, N41, N48, and N52 each carry an N-linked (GlcNAc...) asparagine glycan. A helical transmembrane segment spans residues 67 to 90; sequence VVFIAFLTGFLALVTIIGNILVIV. Residues 91 to 103 lie on the Cytoplasmic side of the membrane; the sequence is AFKVNKQLKTVNN. A helical transmembrane segment spans residues 104-129; the sequence is YFLLSLACADLIIGVISMNLFTTYII. Over 130–141 the chain is Extracellular; the sequence is MNRWALGNLACD. C140 and C220 are disulfide-bonded. A helical transmembrane segment spans residues 142–163; it reads LWLSIDYVASNASVMNLLVISF. Residues 164–183 lie on the Cytoplasmic side of the membrane; it reads DRYFSITRPLTYRAKRTTKR. The chain crosses the membrane as a helical span at residues 184–205; it reads AGVMIGLAWVISFVLWAPAILF. Residues 206-228 are Extracellular-facing; that stretch reads WQYFVGKRTVPPGECFIQFLSEP. Residues 229 to 251 form a helical membrane-spanning segment; sequence TITFGTAIAAFYMPVTIMTILYW. The Cytoplasmic portion of the chain corresponds to 252 to 490; that stretch reads RIYKETEKRT…SLIKEKKAAQ (239 aa). The short motif at 274–280 is the Basolateral sorting signal element; the sequence is AEAENFV. Residues 323-356 are disordered; it reads AEQMDQDHSSSDSWNNNDAAASLENSASSDEEDI. Low complexity predominate over residues 333-344; the sequence is SDSWNNNDAAAS. A Phosphoserine modification is found at S384. The chain crosses the membrane as a helical span at residues 491–513; that stretch reads TLSAILLAFIITWTPYNIMVLVN. Topologically, residues 514-525 are extracellular; that stretch reads TFCDSCIPKTYW. A disulfide bridge connects residues C516 and C519. A helical membrane pass occupies residues 526 to 545; the sequence is NLGYWLCYINSTVNPVCYAL. Residues 546-589 are Cytoplasmic-facing; that stretch reads CNKTFRTTFKTLLLCQCDKRKRRKQQYQQRQSVIFHKRVPEQAL.

This sequence belongs to the G-protein coupled receptor 1 family. Muscarinic acetylcholine receptor subfamily. CHRM3 sub-subfamily. In terms of assembly, homodimer; the dimers can form tetramers. Interacts with NALCN. Interacts with TMEM147.

It is found in the cell membrane. Its subcellular location is the postsynaptic cell membrane. The protein resides in the basolateral cell membrane. The protein localises to the endoplasmic reticulum membrane. Its function is as follows. The muscarinic acetylcholine receptor mediates various cellular responses, including inhibition of adenylate cyclase, breakdown of phosphoinositides and modulation of potassium channels through the action of G proteins. Primary transducing effect is Pi turnover. The protein is Muscarinic acetylcholine receptor M3 (Chrm3) of Rattus norvegicus (Rat).